Here is a 347-residue protein sequence, read N- to C-terminus: Phosphate acyltransferase (347 aa).

Belongs to the PlsX family. Homodimer. Probably interacts with PlsY.

It is found in the cytoplasm. It carries out the reaction a fatty acyl-[ACP] + phosphate = an acyl phosphate + holo-[ACP]. It participates in lipid metabolism; phospholipid metabolism. Catalyzes the reversible formation of acyl-phosphate (acyl-PO(4)) from acyl-[acyl-carrier-protein] (acyl-ACP). This enzyme utilizes acyl-ACP as fatty acyl donor, but not acyl-CoA. The protein is Phosphate acyltransferase of Rhizobium meliloti (strain 1021) (Ensifer meliloti).